Consider the following 450-residue polypeptide: Chromosomal replication initiator protein DnaA (450 aa).

The interval 1 to 84 (MTENEQIFWN…AVDYVYEEDL (84 aa)) is domain I, interacts with DnaA modulators. Positions 84-109 (LIIEQQHQGQQGYTEQAFQQLPAVQS) are domain II. Residues 110-328 (DLNPKYSFDN…GALKDISLVA (219 aa)) form a domain III, AAA+ region region. ATP contacts are provided by G154, G156, K157, and T158. Positions 329-450 (NFKQIDTITV…EIETIKNKIK (122 aa)) are domain IV, binds dsDNA.

The protein belongs to the DnaA family. As to quaternary structure, oligomerizes as a right-handed, spiral filament on DNA at oriC.

Its subcellular location is the cytoplasm. Functionally, plays an essential role in the initiation and regulation of chromosomal replication. ATP-DnaA binds to the origin of replication (oriC) to initiate formation of the DNA replication initiation complex once per cell cycle. Binds the DnaA box (a 9 base pair repeat at the origin) and separates the double-stranded (ds)DNA. Forms a right-handed helical filament on oriC DNA; dsDNA binds to the exterior of the filament while single-stranded (ss)DNA is stabiized in the filament's interior. The ATP-DnaA-oriC complex binds and stabilizes one strand of the AT-rich DNA unwinding element (DUE), permitting loading of DNA polymerase. After initiation quickly degrades to an ADP-DnaA complex that is not apt for DNA replication. Binds acidic phospholipids. The chain is Chromosomal replication initiator protein DnaA from Streptococcus equi subsp. zooepidemicus (strain MGCS10565).